The following is a 159-amino-acid chain: Ribosomal RNA large subunit methyltransferase H (159 aa).

S-adenosyl-L-methionine-binding positions include Ile-76, Gly-108, and Phe-127–Phe-132.

The protein belongs to the RNA methyltransferase RlmH family. In terms of assembly, homodimer.

The protein localises to the cytoplasm. It catalyses the reaction pseudouridine(1915) in 23S rRNA + S-adenosyl-L-methionine = N(3)-methylpseudouridine(1915) in 23S rRNA + S-adenosyl-L-homocysteine + H(+). Its function is as follows. Specifically methylates the pseudouridine at position 1915 (m3Psi1915) in 23S rRNA. The chain is Ribosomal RNA large subunit methyltransferase H from Clostridium botulinum (strain Loch Maree / Type A3).